A 104-amino-acid chain; its full sequence is N(4)-acetylcytidine amidohydrolase (104 aa).

Residues 7-93 form the ASCH domain; that stretch reads MTFFSRFEAD…EVIQEIYPGI (87 aa). Residue Lys-22 is the Proton acceptor of the active site. The active-site Nucleophile is the Thr-25. Glu-75 functions as the Proton donor in the catalytic mechanism.

The protein belongs to the N(4)-acetylcytidine amidohydrolase family.

It catalyses the reaction N(4)-acetylcytidine + H2O = cytidine + acetate + H(+). The catalysed reaction is N(4)-acetyl-2'-deoxycytidine + H2O = 2'-deoxycytidine + acetate + H(+). It carries out the reaction N(4)-acetylcytosine + H2O = cytosine + acetate + H(+). Catalyzes the hydrolysis of N(4)-acetylcytidine (ac4C). In Vibrio vulnificus (strain CMCP6), this protein is N(4)-acetylcytidine amidohydrolase.